The primary structure comprises 233 residues: MTTSVVTLSELLAARVHLGHRFNKWNPKMVSFIYAERNKVHIIDLVQTAFLLGEACDYVKLLAKKGKKFLFVGTRQELNTILAEEAERCNSFYINQRWLGGLLTNWVTIKSRVQALEKKESEGFFNSLPKKESARLKKELDKLRRYFNGIRKMNTLPDVVIIIDQRKDLTAVQECNKLNIPTICIVDTNCNPDIVDLPIPANDDAICSVKLILGKLVDFIKEGQIERELSKTS.

The protein belongs to the universal ribosomal protein uS2 family.

It localises to the plastid. The protein localises to the chloroplast. This Galdieria sulphuraria (Red alga) protein is Small ribosomal subunit protein uS2c (rps2).